The chain runs to 502 residues: 9-beta-pimara-7,15-diene oxidase (502 aa).

2 helical membrane-spanning segments follow: residues 4–26 (INSE…ALLT) and 106–128 (LLVS…GAYW). Heme is bound at residue Cys-438.

Belongs to the cytochrome P450 family. Heme serves as cofactor.

The protein localises to the membrane. It catalyses the reaction 9beta-pimara-7,15-diene + 3 reduced [NADPH--hemoprotein reductase] + 3 O2 = 9beta-pimara-7,15-dien-19-oate + 3 oxidized [NADPH--hemoprotein reductase] + 4 H2O + 4 H(+). Involved in momilactone phytoalexins biosynthesis; acts as a multifunctional diterpene oxidase. Participates in the biosynthetic steps between 9-beta-pimara-7,15-diene and 3-beta-hydroxy-9-beta-pimara-7,15-dien-19,6-beta-olide. Also catalyzes consecutive oxidations at C19 of syn-stemod-13(17)-ene. The sequence is that of 9-beta-pimara-7,15-diene oxidase (CYP99A3) from Oryza sativa subsp. japonica (Rice).